The sequence spans 283 residues: Pantothenate synthetase (283 aa).

Residue 30–37 (MGNLHDGH) coordinates ATP. The active-site Proton donor is His-37. (R)-pantoate is bound at residue Gln-61. Gln-61 lines the beta-alanine pocket. 149 to 152 (GEKD) provides a ligand contact to ATP. A (R)-pantoate-binding site is contributed by Gln-155. 186–189 (LSSR) contributes to the ATP binding site.

It belongs to the pantothenate synthetase family. As to quaternary structure, homodimer.

The protein localises to the cytoplasm. It catalyses the reaction (R)-pantoate + beta-alanine + ATP = (R)-pantothenate + AMP + diphosphate + H(+). It functions in the pathway cofactor biosynthesis; (R)-pantothenate biosynthesis; (R)-pantothenate from (R)-pantoate and beta-alanine: step 1/1. Catalyzes the condensation of pantoate with beta-alanine in an ATP-dependent reaction via a pantoyl-adenylate intermediate. This chain is Pantothenate synthetase, found in Shigella sonnei (strain Ss046).